Here is a 506-residue protein sequence, read N- to C-terminus: FAD-linked oxidoreductase chry5 (506 aa).

An N-terminal signal peptide occupies residues 1 to 17; it reads MHLQALTGLATLAVTAA. The 183-residue stretch at 59 to 241 folds into the FAD-binding PCMH-type domain; sequence LDKPTVNIVA…TSVTSKTYDA (183 aa). 5 N-linked (GlcNAc...) asparagine glycosylation sites follow: Asn-205, Asn-272, Asn-281, Asn-389, and Asn-431.

It belongs to the oxygen-dependent FAD-linked oxidoreductase family. Requires FAD as cofactor.

It functions in the pathway pigment biosynthesis. FAD-linked oxidoreductase; part of the gene cluster that mediates the biosynthesis of the yellow pigment chrysogine. Pyruvic acid and anthranilic acid are likely substrates for the nonribosomal peptide synthetase chry1/NRPS14, with pyruvic acid adenylated by the first A domain and anthranilic acid by the second. If pyruvic acid and anthranilic acid are merged and released from chry1/NRPS14 by hydrolysis, a subsequent amidation would lead to 2-pyruvoylaminobenzamide. This process is probably catalyzed by the amidotransferase chry2 using glutamine as amino donor. The dehydrogenase chry5 that has a terminal berberine bridge domain for C-N cyclization could catalyze the cyclization of 2-pyruvoylaminobenzamide to yield acetyl-4(3H)-quinazolidinone. A final reduction of acetyl-4(3H)-quinazolidinone catalyzed by the oxidoreductase chry4 would result in chrysogine. The chain is FAD-linked oxidoreductase chry5 from Gibberella zeae (strain ATCC MYA-4620 / CBS 123657 / FGSC 9075 / NRRL 31084 / PH-1) (Wheat head blight fungus).